Consider the following 183-residue polypeptide: Putative 3-methyladenine DNA glycosylase (183 aa).

Belongs to the DNA glycosylase MPG family.

The chain is Putative 3-methyladenine DNA glycosylase from Legionella pneumophila (strain Corby).